A 561-amino-acid polypeptide reads, in one-letter code: Arf-GAP domain and FG repeat-containing protein 1 (561 aa).

Residues 11–135 (EKHLKMLRDM…WYVPPEQAKV (125 aa)) enclose the Arf-GAP domain. A C4-type zinc finger spans residues 29–52 (CFDCDQRGPTYVNMTVGSFVCTSC). The residue at position 167 (S167) is a Phosphoserine. The segment at 171 to 193 (LHLNKGTPTQSPVVGRSQGQQQE) is disordered. A compositionally biased stretch (polar residues) spans 176–191 (GTPTQSPVVGRSQGQQ). A Phosphothreonine modification is found at T177. 2 positions are modified to phosphoserine: S181 and S362. O-linked (GlcNAc) serine glycosylation occurs at S367. Residues 409–451 (PVGASPQTQPASSGPAPFGATPSTNPFVAATGPSAASSTNPFQ) are disordered. Residues 442 to 451 (SAASSTNPFQ) show a composition bias toward polar residues.

Interacts with EPS15R and EPS15. Interacts with FCHO1. O-glycosylated.

It is found in the nucleus. The protein localises to the cytoplasmic vesicle. Required for vesicle docking or fusion during acrosome biogenesis. May play a role in RNA trafficking or localization. This chain is Arf-GAP domain and FG repeat-containing protein 1 (Agfg1), found in Rattus norvegicus (Rat).